Consider the following 225-residue polypeptide: Large ribosomal subunit protein bL25 (225 aa).

The tract at residues 197 to 225 (PQREEQMEDTDTAAADEEGDKEEDADKQE) is disordered. Residues 202-225 (QMEDTDTAAADEEGDKEEDADKQE) show a composition bias toward acidic residues.

It belongs to the bacterial ribosomal protein bL25 family. CTC subfamily. As to quaternary structure, part of the 50S ribosomal subunit; part of the 5S rRNA/L5/L18/L25 subcomplex. Contacts the 5S rRNA. Binds to the 5S rRNA independently of L5 and L18.

Its function is as follows. This is one of the proteins that binds to the 5S RNA in the ribosome where it forms part of the central protuberance. The sequence is that of Large ribosomal subunit protein bL25 from Dichelobacter nodosus (strain VCS1703A).